A 411-amino-acid polypeptide reads, in one-letter code: Pyruvate dehydrogenase E1 component subunit alpha, mitochondrial (411 aa).

Residues 1-29 constitute a mitochondrion transit peptide; it reads MFSRAVRLSRAALPIRVASQRVPIAARRS. 10 residues coordinate pyruvate: H111, Y137, R138, G184, V186, D215, G216, A217, N244, and Y246. Residues Y137, R138, G184, V186, D215, G216, A217, and N244 each coordinate thiamine diphosphate. D215 lines the Mg(2+) pocket. Mg(2+) is bound by residues N244 and Y246. Residue H311 coordinates thiamine diphosphate.

In terms of assembly, eukaryotic pyruvate dehydrogenase (PDH) complexes are organized as a core consisting of the oligomeric dihydrolipoamide acetyl-transferase (E2), around which are arranged multiple copies of pyruvate dehydrogenase (E1), dihydrolipoamide dehydrogenase (E3) and protein X (E3BP) bound by non-covalent bonds. The Chaetomium thermophilum PDH complex contains 60 E2 units, 12 E3BP units, about 20 E1 units, and 12 or more E3 units. The units are organized in 1 E2 60-mer, 4 E3BP trimers, about 20 E1 tetramers, and a maximum of 12 E3 dimers. Pyruvate dehydrogenase (E1) is active as a tetramer of 2 alpha and 2 beta subunits. The E3BP trimers are bound inside the icosahedral core with tetrahedral symmetry. Thiamine diphosphate serves as cofactor. Requires Mg(2+) as cofactor.

It localises to the mitochondrion. It catalyses the reaction N(6)-[(R)-lipoyl]-L-lysyl-[protein] + pyruvate + H(+) = N(6)-[(R)-S(8)-acetyldihydrolipoyl]-L-lysyl-[protein] + CO2. Functionally, the 10-megadalton pyruvate dehydrogenase complex contains multiple copies of three enzymatic components: pyruvate dehydrogenase (E1), dihydrolipoamide acetyltransferase (E2) and lipoamide dehydrogenase (E3) and catalyzes the overall oxidative decarboxylation of pyruvate to form acetyl-CoA and CO(2). Within the complex, pyruvate and thiamine pyrophosphate (TPP or vitamin B1) are bound by pyruvate dehydrogenase E1 subunits alpha and beta and pyruvate is decarboxylated leading to the 2-carbon hydrohyethyl bound to TPP. The E2 component contains covalently-bound lipoyl cofactors and transfers the hydroxyethyl group from TPP to an oxidized form of covalently bound lipoamide, and the resulting acetyl group is then transferred to free coenzyme A to form acetyl-CoA and reduced dihydrolipoamide-E2. Finally, the flavoprotein dihydrolipoamide dehydrogenase (E3) re-oxidizes the lipoyl group of dihydrolipoamide-E2 to form lipoamide-E2 and NADH. A fourth subunit, E3BP, is responsible for tethering E3 in proximity to the core, forming the entire metabolon. The chain is Pyruvate dehydrogenase E1 component subunit alpha, mitochondrial from Chaetomium thermophilum (strain DSM 1495 / CBS 144.50 / IMI 039719) (Thermochaetoides thermophila).